Consider the following 1877-residue polypeptide: Protein TIC 214 (1877 aa).

6 helical membrane-spanning segments follow: residues 18 to 38 (IINSVVMVGLYYGFLTTFSIG), 67 to 87 (FIAGQLMMFISIYYAPLHLAL), 90 to 110 (PHTITVLALPYLLFHFFWNNH), 127 to 147 (LSIQCVFLNNLIFQLFNHFIL), 175 to 195 (VGWLIGHIFFMKWVELVLVWI), and 224 to 244 (IFSILLFITCVYYLGRIPSPI). Basic and acidic residues predominate over residues 249-258 (FKETSETEER). The disordered stretch occupies residues 249 to 308 (FKETSETEERGEGEEETDVEIETTFETKGTRQEQEGSTEEDPSLFSEEKEDPDKIDEREE). 2 stretches are compositionally biased toward acidic residues: residues 259–271 (GEGEEETDVEIET) and 284–298 (GSTEEDPSLFSEEKE). Residues 299-308 (DPDKIDEREE) are compositionally biased toward basic and acidic residues.

Belongs to the TIC214 family. In terms of assembly, part of the Tic complex.

Its subcellular location is the plastid. It localises to the chloroplast inner membrane. Functionally, involved in protein precursor import into chloroplasts. May be part of an intermediate translocation complex acting as a protein-conducting channel at the inner envelope. This chain is Protein TIC 214, found in Eucalyptus globulus subsp. globulus (Tasmanian blue gum).